The chain runs to 767 residues: Photosystem I P700 chlorophyll a apoprotein A1 (767 aa).

The next 8 helical transmembrane spans lie at 72–95 (IFSAHFGHLAVIFIWLSGAFFHGA), 158–181 (LMALAIGALVMAGLMLNAGVFHYH), 197–221 (LNHHLAGLLGLGSLSWAGHVIHVSA), 305–323 (IAHHHVAIAVMFIVAGHMY), 364–387 (WHAQLAVNLAIGGSVSIIVAQHMY), 403–429 (IGLFTHHIWIGGFLIVGAGAHAAIAMV), 451–473 (AIISHLNWVCIWLGAHSFGLYIH), and 548–566 (FMVHHIHAFTIHVTVLILL). Residues C590 and C599 each coordinate [4Fe-4S] cluster. A run of 2 helical transmembrane segments spans residues 606–627 (HVFLGLFWMYNSLSIVIFHFSW) and 681–703 (TAAYGIMFLGAHFVFAFSLMFLF). Chlorophyll a' is bound at residue H692. Positions 700 and 708 each coordinate chlorophyll a. W709 serves as a coordination point for phylloquinone. Residues 741–761 (AVGVAHYLLGGIATTWAFFHA) traverse the membrane as a helical segment.

The protein belongs to the PsaA/PsaB family. In terms of assembly, the PsaA/B heterodimer binds the P700 chlorophyll special pair and subsequent electron acceptors. PSI consists of a core antenna complex that captures photons, and an electron transfer chain that converts photonic excitation into a charge separation. The cyanobacterial PSI reaction center is composed of one copy each of PsaA,B,C,D,E,F,I,J,K,L,M and X, and forms trimeric complexes. PSI electron transfer chain: 5 chlorophyll a, 1 chlorophyll a', 2 phylloquinones and 3 4Fe-4S clusters. PSI core antenna: 90 chlorophyll a, 22 carotenoids, 3 phospholipids and 1 galactolipid. P700 is a chlorophyll a/chlorophyll a' dimer, A0 is one or more chlorophyll a, A1 is one or both phylloquinones and FX is a shared 4Fe-4S iron-sulfur center. is required as a cofactor.

The protein resides in the cellular thylakoid membrane. It catalyses the reaction reduced [plastocyanin] + hnu + oxidized [2Fe-2S]-[ferredoxin] = oxidized [plastocyanin] + reduced [2Fe-2S]-[ferredoxin]. In terms of biological role, psaA and PsaB bind P700, the primary electron donor of photosystem I (PSI), as well as the electron acceptors A0, A1 and FX. PSI is a plastocyanin/cytochrome c6-ferredoxin oxidoreductase, converting photonic excitation into a charge separation, which transfers an electron from the donor P700 chlorophyll pair to the spectroscopically characterized acceptors A0, A1, FX, FA and FB in turn. Oxidized P700 is reduced on the lumenal side of the thylakoid membrane by plastocyanin or cytochrome c6. This chain is Photosystem I P700 chlorophyll a apoprotein A1, found in Synechococcus sp. (strain CC9605).